A 928-amino-acid chain; its full sequence is Mating-type protein A-alpha Y4 (928 aa).

Residues Gly-152–Leu-211 constitute a DNA-binding region (homeobox). Disordered stretches follow at residues Lys-255–Pro-296, Asp-310–Asn-329, Thr-340–Pro-359, Tyr-406–Ser-451, and Ala-626–Leu-736. A compositionally biased stretch (basic residues) spans Glu-344 to Pro-353. Residues Lys-635–Arg-657 are compositionally biased toward basic and acidic residues. Low complexity-rich tracts occupy residues Ser-668–Arg-682 and Glu-694–Gly-728.

The protein resides in the nucleus. Functionally, specifies A-alpha-4 mating-type. May regulate the expression of genes specific to the homokaryotic cell type. This chain is Mating-type protein A-alpha Y4, found in Schizophyllum commune (Split gill fungus).